The sequence spans 388 residues: Succinate--CoA ligase [ADP-forming] subunit beta (388 aa).

One can recognise an ATP-grasp domain in the interval 9 to 244 (KSLFAEYGLP…PSQDDAREAH (236 aa)). Residues lysine 46, 53–55 (GRG), glutamate 99, threonine 102, and glutamate 107 contribute to the ATP site. Positions 199 and 213 each coordinate Mg(2+). Substrate-binding positions include asparagine 264 and 321–323 (GIV).

It belongs to the succinate/malate CoA ligase beta subunit family. As to quaternary structure, heterotetramer of two alpha and two beta subunits. Mg(2+) is required as a cofactor.

The enzyme catalyses succinate + ATP + CoA = succinyl-CoA + ADP + phosphate. It carries out the reaction GTP + succinate + CoA = succinyl-CoA + GDP + phosphate. The protein operates within carbohydrate metabolism; tricarboxylic acid cycle; succinate from succinyl-CoA (ligase route): step 1/1. Succinyl-CoA synthetase functions in the citric acid cycle (TCA), coupling the hydrolysis of succinyl-CoA to the synthesis of either ATP or GTP and thus represents the only step of substrate-level phosphorylation in the TCA. The beta subunit provides nucleotide specificity of the enzyme and binds the substrate succinate, while the binding sites for coenzyme A and phosphate are found in the alpha subunit. This chain is Succinate--CoA ligase [ADP-forming] subunit beta, found in Shewanella baltica (strain OS195).